Reading from the N-terminus, the 97-residue chain is Large ribosomal subunit protein bL27 (97 aa).

Positions 14-36 (HKKGGGSTSNGRDSQAKRLGAKA) are disordered.

This sequence belongs to the bacterial ribosomal protein bL27 family.

The chain is Large ribosomal subunit protein bL27 from Streptococcus sanguinis (strain SK36).